The sequence spans 119 residues: MSRSVALAVLALLSLSGLEAIQRTPKIQVYSRHPAENGKSNFLNCYVSGFHPSDIEVDLLKNGERIEKVEHSDLSFSKDWSFYLLYYTEFTPTEKDEYACRVNHVTLSQPKIVKWDRDM.

A signal peptide spans 1 to 20 (MSRSVALAVLALLSLSGLEA). Residues 25–113 (PKIQVYSRHP…HVTLSQPKIV (89 aa)) enclose the Ig-like C1-type domain. Cys-45 and Cys-100 are oxidised to a cystine.

Belongs to the beta-2-microglobulin family. In terms of assembly, heterodimer of an alpha chain and a beta chain. Beta-2-microglobulin is the beta-chain of major histocompatibility complex class I molecules. Forms a heterotrimer with MR1 and a metabolite antigen.

It is found in the secreted. Functionally, component of the class I major histocompatibility complex (MHC). Involved in the presentation of peptide antigens to the immune system. This chain is Beta-2-microglobulin (B2M), found in Pan troglodytes (Chimpanzee).